A 204-amino-acid polypeptide reads, in one-letter code: MSEKPAFVSVQQSLRKSFDAIEPLHEEWNNTLLECNPHLTSLSNLAEQLQACQRVLFKKTPLSSFINLQEHLRFKLQAAMEFNLEILNQKLSTLQRIRDSVSQVVGSVLYMYETSIEKIGLEAILERSSLCPSIADMLEWLQDIEKHYRNQYLQRKLLLQVCGGHLSDIQALPQSWAKQRDAASSKQQHVEDILLSVSFFRMST.

As to quaternary structure, part of the 55LCC heterohexameric ATPase complex. Does not associate with pre-60S ribosomal particles.

The protein resides in the nucleus. Its subcellular location is the cytoplasm. Part of the 55LCC heterohexameric ATPase complex which is chromatin-associated and promotes replisome proteostasis to maintain replication fork progression and genome stability. Required for replication fork progression, sister chromatid cohesion, and chromosome stability. The ATPase activity is specifically enhanced by replication fork DNA and is coupled to cysteine protease-dependent cleavage of replisome substrates in response to replication fork damage. Uses ATPase activity to process replisome substrates in S-phase, facilitating their proteolytic turnover from chromatin to ensure DNA replication and mitotic fidelity. Involved in the cytoplasmic maturation steps of pre-60S ribosomal particles by promoting the release of shuttling protein RSL24D1/RLP24 from the pre-ribosomal particles. The polypeptide is AFG2-interacting ribosome maturation factor (airim) (Xenopus tropicalis (Western clawed frog)).